The sequence spans 142 residues: Large ribosomal subunit protein bL17 (142 aa).

It belongs to the bacterial ribosomal protein bL17 family. Part of the 50S ribosomal subunit. Contacts protein L32.

The chain is Large ribosomal subunit protein bL17 from Brucella canis (strain ATCC 23365 / NCTC 10854 / RM-666).